The primary structure comprises 355 residues: Blue-sensitive opsin (355 aa).

At 1 to 36 (MNGTEGINFYVPLSNKTGLVRSPFEYPQYYLAEPWK) the chain is on the extracellular side. N-linked (GlcNAc...) asparagine glycans are attached at residues Asn-2 and Asn-15. Residues 37-61 (YKVVCCYIFFLIFTGLPINILTLLV) traverse the membrane as a helical segment. Residues 62-73 (TFKHKKLRQPLN) are Cytoplasmic-facing. The helical transmembrane segment at 74 to 98 (YILVNLAVADLFMACFGFTVTFYTA) threads the bilayer. The Extracellular portion of the chain corresponds to 99–113 (WNGYFIFGPIGCAIE). A disulfide bridge connects residues Cys-110 and Cys-187. A helical transmembrane segment spans residues 114 to 133 (GFFATLGGQVALWSLVVLAI). At 134–152 (ERYIVVCKPMGNFRFSATH) the chain is on the cytoplasmic side. Residues 153–176 (ALMGISFTWFMSFSCAAPPLLGWS) traverse the membrane as a helical segment. Residues 177–202 (RYIPEGMQCSCGPDYYTLNPDYHNES) lie on the Extracellular side of the membrane. Asn-200 is a glycosylation site (N-linked (GlcNAc...) asparagine). A helical transmembrane segment spans residues 203 to 230 (YVLYMFGVHFVIPVVVIFFSYGRLICKV). The Cytoplasmic portion of the chain corresponds to 231–252 (REAAAQQQESASTQKAEREVTR). A helical membrane pass occupies residues 253-276 (MVILMVLGFLLAWTPYAMVAFWIF). At 277–284 (TNKGVDFS) the chain is on the extracellular side. A helical transmembrane segment spans residues 285 to 309 (ATLMSVPAFFSKSSSLYNPIIYVLM). An N6-(retinylidene)lysine modification is found at Lys-296. Residues 310–355 (NKQFRNCMITTICCGKNPFGDEDVSSSVSQSKTEVSSVSSSQVSPA) are Cytoplasmic-facing. Residues Cys-322 and Cys-323 are each lipidated (S-palmitoyl cysteine). The tract at residues 332 to 355 (DVSSSVSQSKTEVSSVSSSQVSPA) is disordered. Positions 334–355 (SSSVSQSKTEVSSVSSSQVSPA) are enriched in low complexity.

The protein belongs to the G-protein coupled receptor 1 family. Opsin subfamily. In terms of processing, phosphorylated on some or all of the serine and threonine residues present in the C-terminal region.

The protein localises to the membrane. In terms of biological role, visual pigments are the light-absorbing molecules that mediate vision. They consist of an apoprotein, opsin, covalently linked to cis-retinal. This opsin uses a vitamin A2 chromophore. The chain is Blue-sensitive opsin from Anolis carolinensis (Green anole).